We begin with the raw amino-acid sequence, 134 residues long: ATP synthase epsilon chain (134 aa).

This sequence belongs to the ATPase epsilon chain family. In terms of assembly, F-type ATPases have 2 components, CF(1) - the catalytic core - and CF(0) - the membrane proton channel. CF(1) has five subunits: alpha(3), beta(3), gamma(1), delta(1), epsilon(1). CF(0) has three main subunits: a, b and c.

It localises to the cell inner membrane. Functionally, produces ATP from ADP in the presence of a proton gradient across the membrane. In Rhizobium meliloti (strain 1021) (Ensifer meliloti), this protein is ATP synthase epsilon chain.